A 530-amino-acid polypeptide reads, in one-letter code: Ubiquitin carboxyl-terminal hydrolase 17-like protein 18 (530 aa).

One can recognise a USP domain in the interval 80-375 (AGLQNMGNTC…QAYVLFYIQK (296 aa)). C89 serves as the catalytic Nucleophile. Residue H334 is the Proton acceptor of the active site. 2 stretches are compositionally biased toward basic and acidic residues: residues 382 to 392 (SESVSRGREPR) and 398 to 413 (DTDR…RDHP). Disordered stretches follow at residues 382–414 (SESV…DHPC) and 509–530 (RGRA…LVCQ). A compositionally biased stretch (basic residues) spans 510–524 (GRARRSKGKNKHSKR).

This sequence belongs to the peptidase C19 family. USP17 subfamily.

The protein localises to the nucleus. The protein resides in the endoplasmic reticulum. It carries out the reaction Thiol-dependent hydrolysis of ester, thioester, amide, peptide and isopeptide bonds formed by the C-terminal Gly of ubiquitin (a 76-residue protein attached to proteins as an intracellular targeting signal).. In terms of biological role, deubiquitinating enzyme that removes conjugated ubiquitin from specific proteins to regulate different cellular processes that may include cell proliferation, progression through the cell cycle, apoptosis, cell migration, and the cellular response to viral infection. This is Ubiquitin carboxyl-terminal hydrolase 17-like protein 18 (USP17L18) from Homo sapiens (Human).